The sequence spans 55 residues: Large ribosomal subunit protein bL33 (55 aa).

Belongs to the bacterial ribosomal protein bL33 family.

The protein is Large ribosomal subunit protein bL33 of Rhizobium meliloti (strain 1021) (Ensifer meliloti).